The sequence spans 334 residues: Leucine-rich repeat-containing protein 26 (334 aa).

The first 26 residues, 1–26, serve as a signal peptide directing secretion; the sequence is MRGPSWSRPRPLLLLLLLLSPWPVWA. Residues 27 to 261 are Extracellular-facing; it reads QVSATASPSG…HCAQPLALRD (235 aa). In terms of domain architecture, LRRNT spans 34 to 71; the sequence is PSGSLGAPDCPEVCTCVPGGLASCSALSLPAVPPGLSL. 2 cysteine pairs are disulfide-bonded: Cys43/Cys49 and Cys47/Cys57. LRR repeat units follow at residues 72–93, 96–117, 120–141, 144–167, and 168–190; these read RLRA…AFAG, ALQR…AFWG, ALQL…TFAP, ALRN…GALP, and LLRS…LGRL. Asn147 is a glycosylation site (N-linked (GlcNAc...) asparagine). The region spanning 201–255 is the LRRCT domain; sequence NPWGCGCALRPLCAWLRRHPLPASEAETVLCVWPGRLTLSPLTAFSDAAFSHCAQ. Intrachain disulfides connect Cys205–Cys231 and Cys207–Cys253. The helical transmembrane segment at 262–282 threads the bilayer; the sequence is LAVVYTLGPASFLVSLASCLA. At 283-334 the chain is on the cytoplasmic side; that stretch reads LGSGLTACRARRRRLRTAALRPPRPPDPNPDPDPHGCASPADPGSPAAAAQA. The disordered stretch occupies residues 298 to 334; the sequence is RTAALRPPRPPDPNPDPDPHGCASPADPGSPAAAAQA. Residues 304–313 show a composition bias toward pro residues; that stretch reads PPRPPDPNPD. Low complexity predominate over residues 320-334; that stretch reads ASPADPGSPAAAAQA.

In terms of assembly, interacts with KCNMA1. In terms of tissue distribution, isoform 1 is expressed highly in normal prostate and salivary gland, very weakly in colon, pancreas, and intestine, and not at all in other tissues. Isoform 1 is expressed highly in many cancer cell lines and in breast cancer, pancreatic cancer and colon cancer. Isoform 2 is expressed in cancer cell lines.

It is found in the cell membrane. The protein localises to the cytoplasm. Its subcellular location is the cytoskeleton. In terms of biological role, auxiliary protein of the large-conductance, voltage and calcium-activated potassium channel (BK alpha). Required for the conversion of BK alpha channels from a high-voltage to a low-voltage activated channel type in non-excitable cells. These are characterized by negative membrane voltages and constant low levels of calcium. This is Leucine-rich repeat-containing protein 26 (LRRC26) from Homo sapiens (Human).